Reading from the N-terminus, the 94-residue chain is Large ribosomal subunit protein bL25 (94 aa).

The protein belongs to the bacterial ribosomal protein bL25 family. Part of the 50S ribosomal subunit; part of the 5S rRNA/L5/L18/L25 subcomplex. Contacts the 5S rRNA. Binds to the 5S rRNA independently of L5 and L18.

This is one of the proteins that binds to the 5S RNA in the ribosome where it forms part of the central protuberance. The protein is Large ribosomal subunit protein bL25 of Serratia proteamaculans (strain 568).